Consider the following 374-residue polypeptide: Transaldolase (374 aa).

The active-site Schiff-base intermediate with substrate is the lysine 140.

Belongs to the transaldolase family. Type 2 subfamily.

It localises to the cytoplasm. The catalysed reaction is D-sedoheptulose 7-phosphate + D-glyceraldehyde 3-phosphate = D-erythrose 4-phosphate + beta-D-fructose 6-phosphate. The protein operates within carbohydrate degradation; pentose phosphate pathway; D-glyceraldehyde 3-phosphate and beta-D-fructose 6-phosphate from D-ribose 5-phosphate and D-xylulose 5-phosphate (non-oxidative stage): step 2/3. Its function is as follows. Transaldolase is important for the balance of metabolites in the pentose-phosphate pathway. This Renibacterium salmoninarum (strain ATCC 33209 / DSM 20767 / JCM 11484 / NBRC 15589 / NCIMB 2235) protein is Transaldolase.